A 513-amino-acid chain; its full sequence is Glucose-6-phosphate 1-dehydrogenase 2 (513 aa).

The residue at position 2 (alanine 2) is an N-acetylalanine. Position 8 is a phosphoserine (serine 8). Residue threonine 10 is modified to Phosphothreonine. NADP(+)-binding positions include 38–45 and arginine 72; that span reads GASGDLAK. Lysine 89 is modified (N6-acetyllysine). NADP(+) contacts are provided by tyrosine 147 and lysine 171. D-glucose 6-phosphate contacts are provided by residues lysine 171, 201–205, glutamate 239, and aspartate 258; that span reads HYLDK. Position 171 is an N6-(2-hydroxyisobutyryl)lysine; alternate (lysine 171). N6-acetyllysine; alternate is present on lysine 171. Histidine 263 functions as the Proton acceptor in the catalytic mechanism. Arginine 357 contacts NADP(+). D-glucose 6-phosphate-binding residues include lysine 360 and arginine 365. 3 residues coordinate NADP(+): lysine 366, arginine 370, and arginine 393. D-glucose 6-phosphate is bound at residue glutamine 395. 421–423 is a binding site for NADP(+); that stretch reads DLT. Lysine 432 is subject to N6-acetyllysine. 2 residues coordinate NADP(+): arginine 487 and tyrosine 503. Tyrosine 503 is modified (phosphotyrosine).

Belongs to the glucose-6-phosphate dehydrogenase family. Homotetramer; dimer of dimers. Interacts with SIRT2; the interaction is enhanced by H(2)O(2) treatment. Acetylated by ELP3; acetylation inhibits its homodimerization and enzyme activity. Deacetylated by SIRT2; deacetylation stimulates its enzyme activity. Testis.

It localises to the cytoplasm. Its subcellular location is the cytosol. The protein resides in the membrane. The catalysed reaction is D-glucose 6-phosphate + NADP(+) = 6-phospho-D-glucono-1,5-lactone + NADPH + H(+). Its pathway is carbohydrate degradation; pentose phosphate pathway; D-ribulose 5-phosphate from D-glucose 6-phosphate (oxidative stage): step 1/3. Catalyzes the rate-limiting step of the oxidative pentose-phosphate pathway, which represents a route for the dissimilation of carbohydrates besides glycolysis. The main function of this enzyme is to provide reducing power (NADPH) and pentose phosphates for fatty acid and nucleic acid synthesis. This is Glucose-6-phosphate 1-dehydrogenase 2 (G6pd2) from Mus musculus (Mouse).